The primary structure comprises 81 residues: Small ribosomal subunit protein bS16 (81 aa).

Belongs to the bacterial ribosomal protein bS16 family.

This is Small ribosomal subunit protein bS16 from Clostridium acetobutylicum (strain ATCC 824 / DSM 792 / JCM 1419 / IAM 19013 / LMG 5710 / NBRC 13948 / NRRL B-527 / VKM B-1787 / 2291 / W).